A 194-amino-acid polypeptide reads, in one-letter code: ATP-dependent Clp protease proteolytic subunit (194 aa).

S98 (nucleophile) is an active-site residue. H123 is a catalytic residue.

The protein belongs to the peptidase S14 family. Fourteen ClpP subunits assemble into 2 heptameric rings which stack back to back to give a disk-like structure with a central cavity, resembling the structure of eukaryotic proteasomes.

The protein resides in the cytoplasm. The catalysed reaction is Hydrolysis of proteins to small peptides in the presence of ATP and magnesium. alpha-casein is the usual test substrate. In the absence of ATP, only oligopeptides shorter than five residues are hydrolyzed (such as succinyl-Leu-Tyr-|-NHMec, and Leu-Tyr-Leu-|-Tyr-Trp, in which cleavage of the -Tyr-|-Leu- and -Tyr-|-Trp bonds also occurs).. In terms of biological role, cleaves peptides in various proteins in a process that requires ATP hydrolysis. Has a chymotrypsin-like activity. Plays a major role in the degradation of misfolded proteins. In Sodalis glossinidius (strain morsitans), this protein is ATP-dependent Clp protease proteolytic subunit.